Here is a 269-residue protein sequence, read N- to C-terminus: GTP cyclohydrolase FolE2 (269 aa).

This sequence belongs to the GTP cyclohydrolase IV family.

It carries out the reaction GTP + H2O = 7,8-dihydroneopterin 3'-triphosphate + formate + H(+). The protein operates within cofactor biosynthesis; 7,8-dihydroneopterin triphosphate biosynthesis; 7,8-dihydroneopterin triphosphate from GTP: step 1/1. In terms of biological role, converts GTP to 7,8-dihydroneopterin triphosphate. The sequence is that of GTP cyclohydrolase FolE2 from Burkholderia ambifaria (strain MC40-6).